The sequence spans 87 residues: U3-theraphotoxin-Hhn1h (87 aa).

Positions 1–24 are cleaved as a signal peptide; the sequence is MVNMKASMFLTFAGLVLLFVVCYA. Positions 25-52 are excised as a propeptide; the sequence is SESEEKEFPKEMLSSIFAVDNDSKQEER. Cystine bridges form between cysteine 54–cysteine 67, cysteine 61–cysteine 72, and cysteine 66–cysteine 79.

This sequence belongs to the neurotoxin 10 (Hwtx-1) family. 51 (Hntx-8) subfamily. Hntx-8 sub-subfamily. Expressed by the venom gland.

The protein resides in the secreted. Ion channel inhibitor. The sequence is that of U3-theraphotoxin-Hhn1h from Cyriopagopus hainanus (Chinese bird spider).